The sequence spans 183 residues: Acidic proline-rich protein HP43A (183 aa).

A signal peptide spans 1-14 (MLVVLLTAALLAEH). The disordered stretch occupies residues 22–183 (ISQLSEEEQQ…QGSEEQSTSL (162 aa)). A compositionally biased stretch (acidic residues) spans 52 to 65 (SDEEGDDDGEEDGN). 5 repeat units span residues 81–100 (RPPK…QQQN), 101–120 (RPPK…QQQN), 121–140 (RPPK…QQQN), 141–160 (RPPK…QQQN), and 161–180 (RPPK…EEQS). The span at 86 to 183 (GNQQGPPQQE…QGSEEQSTSL (98 aa)) shows a compositional bias: low complexity.

The protein resides in the secreted. The polypeptide is Acidic proline-rich protein HP43A (H29) (Mesocricetus auratus (Golden hamster)).